We begin with the raw amino-acid sequence, 120 residues long: C-C motif chemokine 23 (120 aa).

The first 21 residues, 1–21, serve as a signal peptide directing secretion; that stretch reads MKVSVAALSCLMLVTALGSQA. Intrachain disulfides connect Cys54–Cys78, Cys55–Cys94, and Cys65–Cys105.

The protein belongs to the intercrine beta (chemokine CC) family.

It localises to the secreted. Its function is as follows. Shows chemotactic activity for monocytes, resting T-lymphocytes, and neutrophils, but not for activated lymphocytes. Inhibits proliferation of myeloid progenitor cells in colony formation assays. This protein can bind heparin. Binds CCR1. The chain is C-C motif chemokine 23 (CCL23) from Macaca mulatta (Rhesus macaque).